We begin with the raw amino-acid sequence, 795 residues long: Phenylalanine--tRNA ligase beta subunit (795 aa).

Positions 39–148 (AGAFHGVVVG…ADAPIGTDIR (110 aa)) constitute a tRNA-binding domain. A B5 domain is found at 401-476 (PTRATITLRR…RIYGYNNIPN (76 aa)). Positions 454, 460, 463, and 464 each coordinate Mg(2+). In terms of domain architecture, FDX-ACB spans 701-794 (SRFPANRRDI…LKQRFQASLR (94 aa)).

It belongs to the phenylalanyl-tRNA synthetase beta subunit family. Type 1 subfamily. Tetramer of two alpha and two beta subunits. The cofactor is Mg(2+).

The protein resides in the cytoplasm. The enzyme catalyses tRNA(Phe) + L-phenylalanine + ATP = L-phenylalanyl-tRNA(Phe) + AMP + diphosphate + H(+). This Pectobacterium atrosepticum (strain SCRI 1043 / ATCC BAA-672) (Erwinia carotovora subsp. atroseptica) protein is Phenylalanine--tRNA ligase beta subunit.